A 491-amino-acid chain; its full sequence is Serine hydroxymethyltransferase (491 aa).

(6S)-5,6,7,8-tetrahydrofolate-binding positions include Leu173 and 177–179 (GHL). An N6-(pyridoxal phosphate)lysine modification is found at Lys285.

It belongs to the SHMT family. As to quaternary structure, homodimer. It depends on pyridoxal 5'-phosphate as a cofactor.

The protein localises to the cytoplasm. The enzyme catalyses (6R)-5,10-methylene-5,6,7,8-tetrahydrofolate + glycine + H2O = (6S)-5,6,7,8-tetrahydrofolate + L-serine. It functions in the pathway one-carbon metabolism; tetrahydrofolate interconversion. Its pathway is amino-acid biosynthesis; glycine biosynthesis; glycine from L-serine: step 1/1. Functionally, catalyzes the reversible interconversion of serine and glycine with tetrahydrofolate (THF) serving as the one-carbon carrier. This reaction serves as the major source of one-carbon groups required for the biosynthesis of purines, thymidylate, methionine, and other important biomolecules. Also exhibits THF-independent aldolase activity toward beta-hydroxyamino acids, producing glycine and aldehydes, via a retro-aldol mechanism. The protein is Serine hydroxymethyltransferase of Cutibacterium acnes (strain DSM 16379 / KPA171202) (Propionibacterium acnes).